Reading from the N-terminus, the 671-residue chain is Pescadillo homolog (671 aa).

2 coiled-coil regions span residues Asn294 to Arg323 and Gln548 to Met584. The BRCT domain occupies Lys317–Ile403. 2 disordered regions span residues Lys552 to Gln577 and Gly634 to Gln671. The span at Gly634–Gly651 shows a compositional bias: basic and acidic residues.

The protein belongs to the pescadillo family.

The protein resides in the nucleus. It is found in the nucleolus. It localises to the nucleoplasm. Required for maturation of ribosomal RNAs and formation of the large ribosomal subunit. The chain is Pescadillo homolog from Leishmania major.